Here is a 1458-residue protein sequence, read N- to C-terminus: GTPase-activating protein and VPS9 domain-containing protein 1 (1458 aa).

The Ras-GAP domain occupies 147–385 (SYLLQVLRYL…AAFLDVVIGG (239 aa)). Serine 227 bears the Phosphoserine mark. Residues threonine 390 and threonine 458 each carry the phosphothreonine modification. Residues 447–475 (AKPGKSSSLDMTPYSTPQMSPATTPANKK) form a disordered region. Positions 451 to 473 (KSSSLDMTPYSTPQMSPATTPAN) are enriched in polar residues. Tyrosine 460 bears the Phosphotyrosine mark. At serine 466 the chain carries Phosphoserine. Position 470 is a phosphothreonine (threonine 470). Residues serine 566 and serine 569 each carry the phosphoserine modification. Disordered regions lie at residues 574–608 (GISE…GSNG), 738–821 (LESC…PSQS), and 846–867 (HYAR…VGGN). Residues 578–588 (GPSNRSNSVSS) show a composition bias toward polar residues. A phosphoserine mark is found at serine 742, serine 746, and serine 757. Polar residues predominate over residues 758–777 (SRPSTPGLSVVSGISATSED). Position 762 is a phosphothreonine (threonine 762). Serine 766 carries the post-translational modification Phosphoserine. The span at 778–789 (IPNKIEDLRSEC) shows a compositional bias: basic and acidic residues. A phosphoserine mark is found at serine 876, serine 902, serine 903, serine 908, and serine 914. Residues 888 to 902 (KQRHSYPERLVRSRS) show a composition bias toward basic and acidic residues. 2 disordered regions span residues 888 to 1022 (KQRH…RLSA) and 1039 to 1072 (KRTS…EEAL). Over residues 930–951 (AAATGATSLVAAPHSSSSSPSK) the composition is skewed to low complexity. 2 stretches are compositionally biased toward basic and acidic residues: residues 952 to 973 (DSSR…DRSR) and 995 to 1006 (EKQEKDKDDLGP). Phosphoserine is present on serine 964. The span at 1010-1022 (STLTDEPSPRLSA) shows a compositional bias: polar residues. 2 positions are modified to phosphoserine: serine 1017 and serine 1044. The segment covering 1061 to 1071 (ESAHDSPREEA) has biased composition (basic and acidic residues). Phosphoserine occurs at positions 1076 and 1083. Residues 1318–1458 (ILRDQVLHEH…EFIKTIDDRK (141 aa)) form the VPS9 domain.

Belongs to the GAPVD1 family. In terms of assembly, interacts with RAB5A. Interacts with TRIP10/CIP4. Present in adipocytes and fibroblasts (at protein level). Ubiquitously expressed.

It is found in the membrane. It localises to the endosome. Its function is as follows. Acts both as a GTPase-activating protein (GAP) and a guanine nucleotide exchange factor (GEF), and participates in various processes such as endocytosis, insulin receptor internalization or LC2A4/GLUT4 trafficking. Acts as a GEF for the Ras-related protein RAB31 by exchanging bound GDP for free GTP, leading to regulate LC2A4/GLUT4 trafficking. In the absence of insulin, it maintains RAB31 in an active state and promotes a futile cycle between LC2A4/GLUT4 storage vesicles and early endosomes, retaining LC2A4/GLUT4 inside the cells. Upon insulin stimulation, it is translocated to the plasma membrane, releasing LC2A4/GLUT4 from intracellular storage vesicles. Also involved in EGFR trafficking and degradation, possibly by promoting EGFR ubiquitination and subsequent degradation by the proteasome. Has GEF activity for Rab5 and GAP activity for Ras. This is GTPase-activating protein and VPS9 domain-containing protein 1 (Gapvd1) from Mus musculus (Mouse).